The chain runs to 130 residues: Cuticle protein 14 isoform b (130 aa).

One can recognise a Chitin-binding type R&amp;R domain in the interval 24 to 90; that stretch reads IGNYNFGYNE…NVHTNEPGTD (67 aa).

The polypeptide is Cuticle protein 14 isoform b (Limulus polyphemus (Atlantic horseshoe crab)).